Reading from the N-terminus, the 871-residue chain is Coatomer subunit gamma-2 (871 aa).

Residues 1–11 (MIKKFDKKDEE) are compositionally biased toward basic and acidic residues. The disordered stretch occupies residues 1–21 (MIKKFDKKDEESGSGSNPFQH). 6 HEAT repeats span residues 64–101 (TEATEAFFAMTRLFQSNDQTLRRMCYLTIKEMATISED), 283–320 (RELAPAVSVLQLFCSSPKPALRYAAVRTLNKVAMKHPS), 321–355 (AVTACNLDLENLITDSNRSIATLAITTLLKTGSES), 356–392 (SVDRLMKQISSFVSEISDEFKVVVVQAISALCQKYPR), 395–430 (SVMMTFLSNMLRDDGGFEYKRAIVDCIISIVEENPE), and 467–504 (PVPSKYIRFIFNRVVLENEAVRAAAVSALAKFGAQNES). The residue at position 594 (threonine 594) is a Phosphothreonine.

This sequence belongs to the COPG family. As to quaternary structure, oligomeric complex. Binds to CDC42. Interacts with JAGN1. Interacts with TMED10 (via cytoplasmic domain).

It localises to the cytoplasm. The protein resides in the cytosol. It is found in the golgi apparatus membrane. Its subcellular location is the cytoplasmic vesicle. The protein localises to the COPI-coated vesicle membrane. Functionally, the coatomer is a cytosolic protein complex that binds to dilysine motifs and reversibly associates with Golgi non-clathrin-coated vesicles, which further mediate biosynthetic protein transport from the ER, via the Golgi up to the trans Golgi network. Coatomer complex is required for budding from Golgi membranes, and is essential for the retrograde Golgi-to-ER transport of dilysine-tagged proteins. In mammals, the coatomer can only be recruited by membranes associated to ADP-ribosylation factors (ARFs), which are small GTP-binding proteins; the complex also influences the Golgi structural integrity, as well as the processing, activity, and endocytic recycling of LDL receptors. The protein is Coatomer subunit gamma-2 (COPG2) of Homo sapiens (Human).